We begin with the raw amino-acid sequence, 641 residues long: Sodium-dependent nutrient amino acid transporter 1 (641 aa).

Polar residues predominate over residues M1 to E21. The disordered stretch occupies residues M1–T37. Over M1–N38 the chain is Cytoplasmic. Residues N22–E35 show a composition bias toward basic and acidic residues. 3 helical membrane passes run W39 to V59, G72 to L92, and T125 to V145. N-linked (GlcNAc...) asparagine glycans are attached at residues N181, N190, and N198. Transmembrane regions (helical) follow at residues P229–M249, A258–V278, A307–S327, I341–L361, L401–L421, V441–G461, T474–L494, C516–I536, and I552–Y572.

Belongs to the sodium:neurotransmitter symporter (SNF) (TC 2.A.22) family.

It localises to the membrane. Functionally, unusual broad substrate spectrum amino acid:sodium cotransporter that promotes absorption of the D isomers of essential amino acids. Neutral amino acids are the preferred substrates, especially methionine and phenylalanine. The sequence is that of Sodium-dependent nutrient amino acid transporter 1 from Drosophila willistoni (Fruit fly).